We begin with the raw amino-acid sequence, 359 residues long: Protein mab-21-like 2-B (359 aa).

Belongs to the mab-21 family.

The protein localises to the nucleus. The protein resides in the cytoplasm. Required for several aspects of embryonic development including normal development of the eye. This is Protein mab-21-like 2-B (mab21l2-b) from Xenopus laevis (African clawed frog).